The chain runs to 129 residues: Calcitonin gene-related peptide 2 (129 aa).

The signal sequence occupies residues Met-1–Ala-25. Residues Gln-26–Gln-81 constitute a propeptide that is removed on maturation. Residues Cys-85 and Cys-90 are joined by a disulfide bond. The residue at position 120 (Phe-120) is a Phenylalanine amide. Residues Asp-126 to Ala-129 constitute a propeptide that is removed on maturation.

The protein belongs to the calcitonin family.

The protein resides in the secreted. Functionally, CALCB/CGRP2 is a peptide hormone that induces vasodilation mediated by the CALCRL-RAMP1 receptor complex. Dilates a variety of vessels including the coronary, cerebral and systemic vasculature. Its abundance in the CNS also points toward a neurotransmitter or neuromodulator role. This Equus caballus (Horse) protein is Calcitonin gene-related peptide 2 (CALCB).